The sequence spans 109 residues: Large ribosomal subunit protein uL22 (109 aa).

The protein belongs to the universal ribosomal protein uL22 family. In terms of assembly, part of the 50S ribosomal subunit.

This protein binds specifically to 23S rRNA; its binding is stimulated by other ribosomal proteins, e.g. L4, L17, and L20. It is important during the early stages of 50S assembly. It makes multiple contacts with different domains of the 23S rRNA in the assembled 50S subunit and ribosome. In terms of biological role, the globular domain of the protein is located near the polypeptide exit tunnel on the outside of the subunit, while an extended beta-hairpin is found that lines the wall of the exit tunnel in the center of the 70S ribosome. The sequence is that of Large ribosomal subunit protein uL22 from Psychrobacter sp. (strain PRwf-1).